The primary structure comprises 547 residues: Chaperonin GroEL 2 (547 aa).

ATP-binding positions include 29–32 (TLGP), 86–90 (DGTTT), glycine 418, 482–484 (NAA), and aspartate 498.

The protein belongs to the chaperonin (HSP60) family. As to quaternary structure, forms a cylinder of 14 subunits composed of two heptameric rings stacked back-to-back. Interacts with the co-chaperonin GroES.

It localises to the cytoplasm. It catalyses the reaction ATP + H2O + a folded polypeptide = ADP + phosphate + an unfolded polypeptide.. Together with its co-chaperonin GroES, plays an essential role in assisting protein folding. The GroEL-GroES system forms a nano-cage that allows encapsulation of the non-native substrate proteins and provides a physical environment optimized to promote and accelerate protein folding. The sequence is that of Chaperonin GroEL 2 from Corynebacterium efficiens (strain DSM 44549 / YS-314 / AJ 12310 / JCM 11189 / NBRC 100395).